Reading from the N-terminus, the 274-residue chain is Large ribosomal subunit protein uL2 (274 aa).

Disordered stretches follow at residues 28–53 (KPYA…TVRH) and 223–274 (VAMN…RRTK). Residues 39-48 (KSGGRNNNGR) show a composition bias toward low complexity. The segment covering 254 to 274 (KGAKTRKNKRTDKFIVRRRTK) has biased composition (basic residues).

It belongs to the universal ribosomal protein uL2 family. As to quaternary structure, part of the 50S ribosomal subunit. Forms a bridge to the 30S subunit in the 70S ribosome.

Functionally, one of the primary rRNA binding proteins. Required for association of the 30S and 50S subunits to form the 70S ribosome, for tRNA binding and peptide bond formation. It has been suggested to have peptidyltransferase activity; this is somewhat controversial. Makes several contacts with the 16S rRNA in the 70S ribosome. This Pseudoalteromonas translucida (strain TAC 125) protein is Large ribosomal subunit protein uL2.